Consider the following 153-residue polypeptide: Endoribonuclease YbeY (153 aa).

Zn(2+)-binding residues include histidine 114, histidine 118, and histidine 124.

This sequence belongs to the endoribonuclease YbeY family. The cofactor is Zn(2+).

It localises to the cytoplasm. Its function is as follows. Single strand-specific metallo-endoribonuclease involved in late-stage 70S ribosome quality control and in maturation of the 3' terminus of the 16S rRNA. The polypeptide is Endoribonuclease YbeY (Shewanella putrefaciens (strain CN-32 / ATCC BAA-453)).